The sequence spans 660 residues: Junctophilin-1 (660 aa).

Residues 1-638 are Cytoplasmic-facing; the sequence is MTGGRFDFDD…EKEANSGPNS (638 aa). 5 MORN repeats span residues 14–36, 38–59, 60–82, 106–128, and 129–151; these read YCGGWEEGKAHGHGICTGPKGQG, YSGSWSHGFEVVGVYTWPSGNT, YQGYWAQGKRHGLGVETKGKWMY, YEGTWSNGLQDGYGVETYGDGGT, and YQGQWAGGMRHGYGVRQSVPYGM. Phosphoserine occurs at positions 157, 216, and 220. The tract at residues 228 to 247 is disordered; that stretch reads SKSSISSKRSSVRSDAAMSR. 2 MORN repeats span residues 281-303 and 304-326; these read YMGEWKNDKRNGFGISERSNGMK and YEGEWANNKRHGYGCTVFPDGSK. Residues 437-454 show a composition bias toward basic and acidic residues; sequence NPEEKVLEKPPSPKESPH. Residues 437 to 631 form a disordered region; it reads NPEEKVLEKP…NDTCPSLEKE (195 aa). S452 is modified (phosphoserine). T461 carries the post-translational modification Phosphothreonine. 3 positions are modified to phosphoserine: S465, S469, and S475. Positions 466–477 are enriched in low complexity; it reads PESSPKQSHSPQ. Basic and acidic residues-rich tracts occupy residues 562–571 and 598–612; these read PPEDREDDRG and VAKESKTEPKAKKSE. A helical; Anchor for type IV membrane protein membrane pass occupies residues 639–659; that stretch reads IMIVLVMLLNIGLAILFVHFL.

Belongs to the junctophilin family. In terms of tissue distribution, specifically expressed in skeletal muscle. Weakly expressed in embryos and neonates. Abundant in young adult muscles.

It localises to the cell membrane. Its subcellular location is the endoplasmic reticulum membrane. The protein localises to the sarcoplasmic reticulum membrane. In terms of biological role, junctophilins contribute to the formation of junctional membrane complexes (JMCs) which link the plasma membrane with the endoplasmic or sarcoplasmic reticulum in excitable cells. Provides a structural foundation for functional cross-talk between the cell surface and intracellular calcium release channels. JPH1 contributes to the construction of the skeletal muscle triad by linking the t-tubule (transverse-tubule) and SR (sarcoplasmic reticulum) membranes. This is Junctophilin-1 (Jph1) from Mus musculus (Mouse).